Here is a 479-residue protein sequence, read N- to C-terminus: Glutamyl-tRNA(Gln) amidotransferase subunit A (479 aa).

Catalysis depends on charge relay system residues K75 and S150. S174 serves as the catalytic Acyl-ester intermediate.

The protein belongs to the amidase family. GatA subfamily. Heterotrimer of A, B and C subunits.

The enzyme catalyses L-glutamyl-tRNA(Gln) + L-glutamine + ATP + H2O = L-glutaminyl-tRNA(Gln) + L-glutamate + ADP + phosphate + H(+). Allows the formation of correctly charged Gln-tRNA(Gln) through the transamidation of misacylated Glu-tRNA(Gln) in organisms which lack glutaminyl-tRNA synthetase. The reaction takes place in the presence of glutamine and ATP through an activated gamma-phospho-Glu-tRNA(Gln). The polypeptide is Glutamyl-tRNA(Gln) amidotransferase subunit A (Synechococcus elongatus (strain ATCC 33912 / PCC 7942 / FACHB-805) (Anacystis nidulans R2)).